Consider the following 1185-residue polypeptide: Syntaxin-binding protein 5-like (1185 aa).

Met1 is modified (N-acetylmethionine). Residues 15–44 (ASSPGSGSSSGSNSGGAGSGSVHPGGTAGL) form a disordered region. Residues 16–26 (SSPGSGSSSGS) are compositionally biased toward low complexity. WD repeat units lie at residues 73 to 106 (TALAFDPVQKILAIGTRTGAIRILGRPGVDCYCQ), 113 to 152 (VLQLQFLINEGALVSASSDDTLHLWNLRQKRPAILHSLKF), 157 to 193 (ITYCHLPFQSKWLYVGTERGNTHIVNIESFILSGYVI), 212 to 246 (HLSDSPRDEGKLLIGYENGTVVFWDLKSKRAELRV), 252 to 284 (IHSIDWHHEGKQFMCSHSDGSLTLWNLKSPSRP), 306 to 348 (PILK…KAIT), 356 to 390 (IVEFLTLCETPYPNEFQEPYAVAVLLEKDLIVVDL), 412 to 489 (TCTA…YKLK), 517 to 628 (QMIY…DLVI), and 642 to 704 (TSLS…IADN). Thr567 is subject to Phosphothreonine. A disordered region spans residues 567-601 (TPEPETSPPFPDLSSQLPPSRSLSGSTNTVSSEGV). Phosphoserine is present on residues Ser573, Ser588, and Ser592. Residues 578–592 (DLSSQLPPSRSLSGS) show a composition bias toward low complexity. The residue at position 595 (Thr595) is a Phosphothreonine. At Ser598 the chain carries Phosphoserine. Arg708 is modified (omega-N-methylarginine). The span at 747 to 768 (TSDHVNGHCTSPTSQSCSSGKR) shows a compositional bias: polar residues. The disordered stretch occupies residues 747–770 (TSDHVNGHCTSPTSQSCSSGKRLS). Residues Ser762, Ser764, Ser765, Ser770, Ser771, Ser792, Ser799, Ser811, Ser819, Ser821, and Ser822 each carry the phosphoserine modification. 4 WD repeats span residues 831–888 (ITAL…SGTF), 897–968 (TFSC…QTCL), 973–1017 (ITET…LDVN), and 1031–1054 (CFTNEGQALYLVSPTEIQRLTYSQ). Thr1092 carries the phosphothreonine modification. The v-SNARE coiled-coil homology domain occupies 1120-1180 (SIEGMKGAAG…HELMLKYKDK (61 aa)).

It belongs to the WD repeat L(2)GL family. Interacts with STX1A and STX4. Phosphorylated, leading to STXBP5L increased turnover and subsequent de-repression of insulin secretion. Phosphorylated on serine residues in response to glucose or phorbol esters. In terms of processing, ubiquitinated by the E3 ligase SYVN1, leading to STXBP5L proteasomal degradation. In terms of tissue distribution, detected in hippocampus and cerebellum. Expressed in pancreatic beta-cells where it modulates insulin secretion.

It localises to the cytoplasm. The protein localises to the cell membrane. The protein resides in the membrane. Functionally, plays a role in vesicle trafficking and exocytosis inhibition. In pancreatic beta-cells, inhibits insulin secretion probably by interacting with and regulating STX1A and STX4, key t-SNARE proteins involved in the fusion of insulin granules to the plasma membrane. Also plays a role in neurotransmitter release by inhibiting basal acetylcholine release from axon terminals and by preventing synaptic fatigue upon repetitive stimulation. Promotes as well axonal outgrowth. The protein is Syntaxin-binding protein 5-like (Stxbp5l) of Mus musculus (Mouse).